The chain runs to 436 residues: Fibrinogen gamma chain (436 aa).

Positions 1 to 25 (MSWSLQPPSFLLCCLLLLFSPTGLA) are cleaved as a signal peptide. A glycan (N-linked (GlcNAc...) asparagine) is linked at asparagine 77. Residues 169-415 (QIHDTTGKDC…ETTMKIIPFN (247 aa)) form the Fibrinogen C-terminal domain. The cysteines at positions 178 and 207 are disulfide-linked. 3 residues coordinate Ca(2+): aspartate 343, aspartate 345, and glycine 349. Cysteine 351 and cysteine 364 are joined by a disulfide. Residue glutamine 423 forms an Isoglutamyl lysine isopeptide (Gln-Lys) (interchain with K-431) linkage. Position 430 is a phosphoserine (serine 430). Lysine 431 is covalently cross-linked (Isoglutamyl lysine isopeptide (Lys-Gln) (interchain with Q-423)).

In terms of assembly, heterohexamer; disulfide linked. Contains 2 sets of 3 non-identical chains (alpha, beta and gamma). The 2 heterotrimers are in head to head conformation with the N-termini in a small central domain. Conversion of fibrinogen to fibrin is triggered by thrombin, which cleaves fibrinopeptides A and B from alpha and beta chains, and thus exposes the N-terminal polymerization sites responsible for the formation of the soft clot. The soft clot is converted into the hard clot by factor XIIIA which catalyzes the epsilon-(gamma-glutamyl)lysine cross-linking between gamma chains (stronger) and between alpha chains (weaker) of different monomers.

It is found in the secreted. In terms of biological role, together with fibrinogen alpha (FGA) and fibrinogen beta (FGB), polymerizes to form an insoluble fibrin matrix. Fibrin has a major function in hemostasis as one of the primary components of blood clots. In addition, functions during the early stages of wound repair to stabilize the lesion and guide cell migration during re-epithelialization. Was originally thought to be essential for platelet aggregation, based on in vitro studies using anticoagulated blood. However, subsequent studies have shown that it is not absolutely required for thrombus formation in vivo. Enhances expression of SELP in activated platelets via an ITGB3-dependent pathway. Maternal fibrinogen is essential for successful pregnancy. Fibrin deposition is also associated with infection, where it protects against IFNG-mediated hemorrhage. May also facilitate the immune response via both innate and T-cell mediated pathways. The polypeptide is Fibrinogen gamma chain (Fgg) (Mus musculus (Mouse)).